Consider the following 385-residue polypeptide: Cytochrome b (385 aa).

The next 4 helical transmembrane spans lie at 32-52, 76-98, 113-133, and 179-199; these read FGSL…TLAM, WFIR…AHMG, PWSI…MGYV, and FFAL…LHLI. 2 residues coordinate heme b: histidine 82 and histidine 96. Residues histidine 183 and histidine 197 each contribute to the heme b site. Residue histidine 202 coordinates a ubiquinone. A run of 4 helical transmembrane segments spans residues 225–245, 289–309, 321–341, and 348–368; these read YSFK…LFVF, LGGV…PIVD, ISKL…VLGQ, and FIVL…ILLP.

It belongs to the cytochrome b family. As to quaternary structure, fungal cytochrome b-c1 complex contains 10 subunits; 3 respiratory subunits, 2 core proteins and 5 low-molecular weight proteins. Cytochrome b-c1 complex is a homodimer. Heme b is required as a cofactor.

Its subcellular location is the mitochondrion inner membrane. In terms of biological role, component of the ubiquinol-cytochrome c reductase complex (complex III or cytochrome b-c1 complex) that is part of the mitochondrial respiratory chain. The b-c1 complex mediates electron transfer from ubiquinol to cytochrome c. Contributes to the generation of a proton gradient across the mitochondrial membrane that is then used for ATP synthesis. The sequence is that of Cytochrome b (COB) from Yarrowia lipolytica (strain CLIB 122 / E 150) (Yeast).